The sequence spans 134 residues: Small ribosomal subunit protein uS8c (134 aa).

It belongs to the universal ribosomal protein uS8 family. In terms of assembly, part of the 30S ribosomal subunit.

Its subcellular location is the plastid. It is found in the chloroplast. In terms of biological role, one of the primary rRNA binding proteins, it binds directly to 16S rRNA central domain where it helps coordinate assembly of the platform of the 30S subunit. The sequence is that of Small ribosomal subunit protein uS8c (rps8) from Chloranthus spicatus (Chulantree).